A 484-amino-acid chain; its full sequence is Phosphoenolpyruvate carboxylase (484 aa).

It belongs to the PEPCase type 2 family. Homotetramer. Mg(2+) serves as cofactor.

The catalysed reaction is oxaloacetate + phosphate = phosphoenolpyruvate + hydrogencarbonate. Catalyzes the irreversible beta-carboxylation of phosphoenolpyruvate (PEP) to form oxaloacetate (OAA), a four-carbon dicarboxylic acid source for the tricarboxylic acid cycle. This chain is Phosphoenolpyruvate carboxylase, found in Methanospirillum hungatei JF-1 (strain ATCC 27890 / DSM 864 / NBRC 100397 / JF-1).